We begin with the raw amino-acid sequence, 304 residues long: Cell surface-binding protein OPG105 (304 aa).

Positions 1–235 (MSQQLSPINI…NDDTEVYYSG (235 aa)) constitute an Alpha-carbonic anhydrase domain. Over 1 to 275 (MSQQLSPINI…YQKYIEGNKT (275 aa)) the chain is Virion surface. The helical transmembrane segment at 276–294 (FAIIAIVFVYILTAILFLM) threads the bilayer. At 295-304 (SRRYSREKQN) the chain is on the intravirion side.

It belongs to the alpha-carbonic anhydrase family. In terms of assembly, homodimer; disulfide-linked. In terms of processing, apparently non-glycosylated.

It localises to the virion membrane. Binds to chondroitin sulfate on the cell surface to provide virion attachment to target cell. This chain is Cell surface-binding protein OPG105 (OPG105), found in Homo sapiens (Human).